Reading from the N-terminus, the 285-residue chain is Alginate lyase (285 aa).

A signal peptide spans 1–20 (MIKSNLVISSLAIVSSMSYA).

The protein belongs to the polysaccharide lyase 6 family.

It catalyses the reaction Eliminative cleavage of alginate to give oligosaccharides with 4-deoxy-alpha-L-erythro-hex-4-enuronosyl groups at their non-reducing ends and beta-D-mannuronate at their reducing end.. This chain is Alginate lyase (alxM), found in Photobacterium sp. (strain ATCC 43367).